A 285-amino-acid polypeptide reads, in one-letter code: 2-dehydro-3-deoxyphosphooctonate aldolase (285 aa).

The protein belongs to the KdsA family.

The protein localises to the cytoplasm. It carries out the reaction D-arabinose 5-phosphate + phosphoenolpyruvate + H2O = 3-deoxy-alpha-D-manno-2-octulosonate-8-phosphate + phosphate. The protein operates within carbohydrate biosynthesis; 3-deoxy-D-manno-octulosonate biosynthesis; 3-deoxy-D-manno-octulosonate from D-ribulose 5-phosphate: step 2/3. It functions in the pathway bacterial outer membrane biogenesis; lipopolysaccharide biosynthesis. In Albidiferax ferrireducens (strain ATCC BAA-621 / DSM 15236 / T118) (Rhodoferax ferrireducens), this protein is 2-dehydro-3-deoxyphosphooctonate aldolase.